Here is a 328-residue protein sequence, read N- to C-terminus: Apoptosis facilitator Bcl-2-like protein 14 (328 aa).

Phosphoserine is present on Ser-44. The BH3 motif lies at 213–227 (IVELLKFSGDQLGRE). A BH2 motif is present at residues 309–316 (WVQQNGGW).

It belongs to the Bcl-2 family. Phosphorylated by MELK, leading to inhibit its pro-apoptotic function.

It localises to the cytoplasm. Plays a role in apoptosis. The sequence is that of Apoptosis facilitator Bcl-2-like protein 14 (Bcl2l14) from Mus musculus (Mouse).